The following is a 487-amino-acid chain: Citrate/succinate antiporter (487 aa).

14 consecutive transmembrane segments (helical) span residues Leu-11 to Pro-31, Phe-60 to Leu-80, Gly-95 to Leu-115, Thr-138 to Ser-158, Ile-190 to Val-210, Ala-214 to Leu-234, Phe-237 to Val-257, Trp-288 to Ile-308, Asn-309 to Trp-329, Leu-345 to Ala-365, Ala-379 to Ser-399, His-401 to Met-421, Leu-424 to Gly-444, and Leu-463 to Leu-483.

This sequence belongs to the SLC13A/DASS transporter (TC 2.A.47) family. DIT1 subfamily.

The protein localises to the cell inner membrane. In terms of biological role, responsible for the uptake of citrate in exchange to the efflux of succinate. Has a relatively broad specificity for C(4)-dicarboxylates and tricarboxylates. This Escherichia coli O157:H7 protein is Citrate/succinate antiporter (citT).